Consider the following 337-residue polypeptide: Glucokinase (337 aa).

Residue 11–16 participates in ATP binding; sequence ADIGGT.

The protein belongs to the bacterial glucokinase family.

Its subcellular location is the cytoplasm. It catalyses the reaction D-glucose + ATP = D-glucose 6-phosphate + ADP + H(+). The protein is Glucokinase of Xylella fastidiosa (strain M23).